Here is a 216-residue protein sequence, read N- to C-terminus: MOB kinase activator 1B (216 aa).

An N-acetylserine modification is found at Ser2. A phosphothreonine; by STK4/MST1 mark is found at Thr12 and Thr35. Residues Cys79, Cys84, His161, and His166 each contribute to the Zn(2+) site.

Belongs to the MOB1/phocein family. In terms of assembly, binds STK38L. Interacts with LATS1 and LATS2. Phosphorylated by STK3/MST2 and STK4/MST1 and this phosphorylation enhances its binding to LATS1. Adrenal gland, bone marrow, brain, lung, placenta, prostate, salivary gland, skeletal muscle, testis, thymus, thyroid gland, uterus, colon with mucosa, fetal brain and fetal liver.

Its subcellular location is the cytoplasm. The protein resides in the nucleus. Its function is as follows. Activator of LATS1/2 in the Hippo signaling pathway which plays a pivotal role in organ size control and tumor suppression by restricting proliferation and promoting apoptosis. The core of this pathway is composed of a kinase cascade wherein STK3/MST2 and STK4/MST1, in complex with its regulatory protein SAV1, phosphorylates and activates LATS1/2 in complex with its regulatory protein MOB1, which in turn phosphorylates and inactivates YAP1 oncoprotein and WWTR1/TAZ. Phosphorylation of YAP1 by LATS1/2 inhibits its translocation into the nucleus to regulate cellular genes important for cell proliferation, cell death, and cell migration. Stimulates the kinase activity of STK38L. The chain is MOB kinase activator 1B from Homo sapiens (Human).